The primary structure comprises 881 residues: Serine/threonine-protein phosphatase 6 regulatory subunit 1 (881 aa).

Residues 10-403 (SSHLDTLLER…VFNNFLHAQV (394 aa)) are interaction with PPP6C. Residue serine 232 is modified to Phosphoserine. Threonine 524 bears the Phosphothreonine mark. Phosphoserine is present on residues serine 529, serine 530, serine 531, serine 635, and serine 638. Composition is skewed to acidic residues over residues 621–642 (DDDE…DGED) and 669–686 (DSED…DEEG). The tract at residues 621-881 (DDDEEEEDEE…PEGPASPGSQ (261 aa)) is disordered. The span at 700 to 710 (YPSPGPQPPGP) shows a compositional bias: pro residues. Serine 702, serine 726, and serine 759 each carry phosphoserine. Polar residues predominate over residues 814-830 (APSSSDSATRDPSTSVP). The residue at position 846 (serine 846) is a Phosphoserine.

Belongs to the SAPS family. In terms of assembly, protein phosphatase 6 (PP6) holoenzyme is proposed to be a heterotrimeric complex formed of the catalytic subunit, a SAPS domain-containing subunit (PP6R) and an ankyrin repeat-domain containing regulatory subunit (ARS). Interacts with PPP6C and NFKBIE. Interacts with ANKRD28, ANKRD44 and ANKRD52. As to expression, ubiquitous with higher expression in testis.

It localises to the cytoplasm. In terms of biological role, regulatory subunit of protein phosphatase 6 (PP6). May function as a scaffolding PP6 subunit. Involved in the PP6-mediated dephosphorylation of NFKBIE opposing its degradation in response to TNF-alpha. The chain is Serine/threonine-protein phosphatase 6 regulatory subunit 1 (PPP6R1) from Homo sapiens (Human).